The sequence spans 313 residues: MRIVFVGTPEFAAEILEHLIKNGFNVVGVVTQPDKPRGRGRKVAPTPVKAVAEKHEVPFIQPESINKKEALEFLRSVRPDVIIVASYGKILGEKVLSLPRLGCYNIHPSLLPKYRGASPIQRVLENGEERTGVTIYKMVKELDAGPIALQKEISVDPFETFDQLEKRLIELSKEMLIEFLEKLKTGNIELKEQDHSRATYAPMIKKEDLIVDFSKDAESVKNKIRAYDSRPGARAFLGNVEVKLFGVTAIDSSGDEPGLINYIDREGAWIGTGDGKVKVRYIQFPGKKKMTFWEAKNGRLIIEGMRFERRYES.

109–112 (SLLP) is a binding site for (6S)-5,6,7,8-tetrahydrofolate.

The protein belongs to the Fmt family.

The catalysed reaction is L-methionyl-tRNA(fMet) + (6R)-10-formyltetrahydrofolate = N-formyl-L-methionyl-tRNA(fMet) + (6S)-5,6,7,8-tetrahydrofolate + H(+). Attaches a formyl group to the free amino group of methionyl-tRNA(fMet). The formyl group appears to play a dual role in the initiator identity of N-formylmethionyl-tRNA by promoting its recognition by IF2 and preventing the misappropriation of this tRNA by the elongation apparatus. The sequence is that of Methionyl-tRNA formyltransferase from Thermotoga maritima (strain ATCC 43589 / DSM 3109 / JCM 10099 / NBRC 100826 / MSB8).